The chain runs to 541 residues: GTPase Obg (541 aa).

Positions 2 to 159 (PTFVDRVVLH…LDAVLELKSV (158 aa)) constitute an Obg domain. The disordered stretch occupies residues 63 to 84 (HPHQRAGGGRPGQGSNRHGADG). One can recognise an OBG-type G domain in the interval 160-332 (ADVALVGFPS…LALALAELVA (173 aa)). GTP is bound by residues 166–173 (GFPSAGKS), 191–195 (FTTLV), 213–216 (DVPG), 284–287 (NKVD), and 313–315 (STA). Positions 173 and 193 each coordinate Mg(2+). Residues 350-427 (PRAVDEPDFT…IGAVTFDWEP (78 aa)) form the OCT domain. The tract at residues 497–541 (KRLTRAQRTALSDSADDFDDGAGFSDSAAFGDSGGSGGDADGGRG) is disordered. Residues 517-527 (GAGFSDSAAFG) show a composition bias toward low complexity. The segment covering 528 to 541 (DSGGSGGDADGGRG) has biased composition (gly residues).

Belongs to the TRAFAC class OBG-HflX-like GTPase superfamily. OBG GTPase family. In terms of assembly, monomer. Requires Mg(2+) as cofactor.

It is found in the cytoplasm. In terms of biological role, an essential GTPase which binds GTP, GDP and possibly (p)ppGpp with moderate affinity, with high nucleotide exchange rates and a fairly low GTP hydrolysis rate. Plays a role in control of the cell cycle, stress response, ribosome biogenesis and in those bacteria that undergo differentiation, in morphogenesis control. The polypeptide is GTPase Obg (Parafrankia sp. (strain EAN1pec)).